Here is a 604-residue protein sequence, read N- to C-terminus: Elongation factor 4 (604 aa).

In terms of domain architecture, tr-type G spans 9–191 (DAIRNFCIIA…AVISRVPAPA (183 aa)). GTP-binding positions include 21-26 (DHGKST) and 138-141 (NKID).

This sequence belongs to the TRAFAC class translation factor GTPase superfamily. Classic translation factor GTPase family. LepA subfamily.

The protein resides in the cell inner membrane. It carries out the reaction GTP + H2O = GDP + phosphate + H(+). Required for accurate and efficient protein synthesis under certain stress conditions. May act as a fidelity factor of the translation reaction, by catalyzing a one-codon backward translocation of tRNAs on improperly translocated ribosomes. Back-translocation proceeds from a post-translocation (POST) complex to a pre-translocation (PRE) complex, thus giving elongation factor G a second chance to translocate the tRNAs correctly. Binds to ribosomes in a GTP-dependent manner. This chain is Elongation factor 4, found in Prosthecochloris aestuarii (strain DSM 271 / SK 413).